Here is a 250-residue protein sequence, read N- to C-terminus: Triosephosphate isomerase (250 aa).

10 to 12 (NWK) is a binding site for substrate. Residue histidine 96 is the Electrophile of the active site. The Proton acceptor role is filled by glutamate 168. Substrate contacts are provided by residues glycine 174, serine 214, and 235 to 236 (GG).

Belongs to the triosephosphate isomerase family. Homodimer.

It is found in the cytoplasm. It catalyses the reaction D-glyceraldehyde 3-phosphate = dihydroxyacetone phosphate. The protein operates within carbohydrate biosynthesis; gluconeogenesis. It participates in carbohydrate degradation; glycolysis; D-glyceraldehyde 3-phosphate from glycerone phosphate: step 1/1. Its function is as follows. Involved in the gluconeogenesis. Catalyzes stereospecifically the conversion of dihydroxyacetone phosphate (DHAP) to D-glyceraldehyde-3-phosphate (G3P). The polypeptide is Triosephosphate isomerase (Streptococcus suis (strain 98HAH33)).